A 74-amino-acid polypeptide reads, in one-letter code: Protein SlyX homolog (74 aa).

It belongs to the SlyX family.

The chain is Protein SlyX homolog from Aliivibrio salmonicida (strain LFI1238) (Vibrio salmonicida (strain LFI1238)).